Here is a 643-residue protein sequence, read N- to C-terminus: UPF0313 protein CLD_0573 (643 aa).

Positions 295 to 566 (AIKEVKFSIT…RMQRALLQFS (272 aa)) constitute a Radical SAM core domain. Positions 309, 313, and 316 each coordinate [4Fe-4S] cluster. The segment at 598 to 643 (NKPYKKSHKKNNAKNNNNHYNKNNNKNKDISKKNKKNSLSKHKKRK) is disordered. Positions 600–609 (PYKKSHKKNN) are enriched in basic residues. Residues 610–621 (AKNNNNHYNKNN) are compositionally biased toward low complexity. The segment covering 630-643 (KNKKNSLSKHKKRK) has biased composition (basic residues).

This sequence belongs to the UPF0313 family. It depends on [4Fe-4S] cluster as a cofactor.

In Clostridium botulinum (strain Okra / Type B1), this protein is UPF0313 protein CLD_0573.